A 27-amino-acid chain; its full sequence is Phospholipase A2 2 (27 aa).

The disordered stretch occupies residues 1–27; it reads FMKVIDPGTKWCGPGNKAADDTDNGKN. The Ca(2+) site is built by tryptophan 11, glycine 13, and glycine 15. Positions 18–27 are enriched in basic and acidic residues; the sequence is AADDTDNGKN.

Belongs to the phospholipase A2 family. Requires Ca(2+) as cofactor. In terms of tissue distribution, expressed by the venom gland.

It is found in the secreted. The catalysed reaction is a 1,2-diacyl-sn-glycero-3-phosphocholine + H2O = a 1-acyl-sn-glycero-3-phosphocholine + a fatty acid + H(+). In terms of biological role, PLA2 catalyzes the calcium-dependent hydrolysis of the 2-acyl groups in 3-sn-phosphoglycerides. This is Phospholipase A2 2 from Opisthacanthus cayaporum (South American scorpion).